The primary structure comprises 361 residues: MMMPELPEDLLVEILCRVPATSLKRLRSTCKLWNHLYNDKRFKSKHCHKAPRQSLILMWKNFGFSSISINLQRVSPIEVTGELNLIDHHSSLGMFRNSPLCQTSGLLLCVNVEKINTRLVVWNPCTGKTKWIQHRRMGYICNYALGSYQDKKSDNNSYKILSHGIYGGQEFEIYEINSNSWRILDVTVDSSLYIENVSLKGKTYWFATDGNDKPCDLFLICFDYTTERFERLCLPYQIPYFRNTSLSVVKEEKLSVLLQPSLTSKTQIWVTNKIGEAKVLSWIKFLTVDLKPEIKYGIKFLVDEENKVLVYEQNFVINGKNNMIYVVGEDNEVREVVFRVGLKPLFFYYVPSLTQIRQGND.

The region spanning 1 to 45 (MMMPELPEDLLVEILCRVPATSLKRLRSTCKLWNHLYNDKRFKSK) is the F-box domain.

The chain is Putative F-box protein At3g25460 from Arabidopsis thaliana (Mouse-ear cress).